Here is a 504-residue protein sequence, read N- to C-terminus: DnaJ homolog subfamily C member 3 (504 aa).

Residues methionine 1–cysteine 31 form the signal peptide. TPR repeat units follow at residues valine 37 to asparagine 70, isoleucine 72 to phenylalanine 104, threonine 105 to glutamate 138, methionine 154 to aspartate 187, glutamate 189 to asparagine 221, threonine 222 to histidine 255, leucine 268 to valine 301, isoleucine 306 to asparagine 339, and valine 340 to aspartate 373. Cysteines 248 and 258 form a disulfide. Position 274 is a phosphoserine (serine 274). Cysteine 313 and cysteine 329 are disulfide-bonded. Residues glutamine 375–arginine 393 are flexible linker. The J domain maps to aspartate 394 to glutamate 462. The interval aspartate 451–serine 481 is disordered.

Interacts with EIF2AK4/GCN2; this interaction occurs under endoplasmic reticulum (ER) stress, hypothermic and amino acid starving stress conditions and inhibits EIF2AK4/GCN2 kinase activity. Interacts with EIF2AK3. Interacts with EIF2AK2. Forms a trimeric complex with DNAJB1 and HSPA8. Interacts with THAP12.

The protein resides in the endoplasmic reticulum. Its function is as follows. Involved in the unfolded protein response (UPR) during endoplasmic reticulum (ER) stress. Acts as a negative regulator of the EIF2AK4/GCN2 kinase activity by preventing the phosphorylation of eIF-2-alpha at 'Ser-52' and hence attenuating general protein synthesis under ER stress, hypothermic and amino acid starving stress conditions. Co-chaperone of HSPA8/HSC70, it stimulates its ATPase activity. May inhibit both the autophosphorylation of EIF2AK2/PKR and the ability of EIF2AK2 to catalyze phosphorylation of the EIF2A. May inhibit EIF2AK3/PERK activity. The sequence is that of DnaJ homolog subfamily C member 3 (DNAJC3) from Bos taurus (Bovine).